The following is a 192-amino-acid chain: Ion-translocating oxidoreductase complex subunit B (192 aa).

The interval 1–26 (MEMIVIAVVALTLLALLFGMLLGYAS) is hydrophobic. The 60-residue stretch at 32–91 (EEDPVVDQVDELLPQSQCGQCGYPGCRPYAEAVANNGEQINRCVPGGEPVMQKIATLLNV) folds into the 4Fe-4S domain. [4Fe-4S] cluster-binding residues include C49, C52, C57, C74, C117, C120, C123, C127, C147, C150, C153, and C157. 4Fe-4S ferredoxin-type domains follow at residues 108–137 (MLAV…GATR) and 138–167 (AMHT…LRPA).

This sequence belongs to the 4Fe4S bacterial-type ferredoxin family. RnfB subfamily. As to quaternary structure, the complex is composed of six subunits: RnfA, RnfB, RnfC, RnfD, RnfE and RnfG. [4Fe-4S] cluster is required as a cofactor.

It is found in the cell inner membrane. In terms of biological role, part of a membrane-bound complex that couples electron transfer with translocation of ions across the membrane. This is Ion-translocating oxidoreductase complex subunit B from Cronobacter sakazakii (strain ATCC BAA-894) (Enterobacter sakazakii).